We begin with the raw amino-acid sequence, 553 residues long: Hydroxylamine reductase (553 aa).

4 residues coordinate [2Fe-2S] cluster: C3, C6, C18, and C25. Hybrid [4Fe-2O-2S] cluster contacts are provided by H249, E273, C317, C405, C433, C459, E493, and K495. Position 405 is a cysteine persulfide (C405).

It belongs to the HCP family. It depends on [2Fe-2S] cluster as a cofactor. The cofactor is hybrid [4Fe-2O-2S] cluster.

It is found in the cytoplasm. The enzyme catalyses A + NH4(+) + H2O = hydroxylamine + AH2 + H(+). Its function is as follows. Catalyzes the reduction of hydroxylamine to form NH(3) and H(2)O. In Actinobacillus succinogenes (strain ATCC 55618 / DSM 22257 / CCUG 43843 / 130Z), this protein is Hydroxylamine reductase.